The sequence spans 252 residues: Probable transcriptional regulatory protein A1C_04175 (252 aa).

This sequence belongs to the TACO1 family.

The protein localises to the cytoplasm. The chain is Probable transcriptional regulatory protein A1C_04175 from Rickettsia akari (strain Hartford).